The chain runs to 118 residues: Large ribosomal subunit protein bL19 (118 aa).

It belongs to the bacterial ribosomal protein bL19 family.

Its function is as follows. This protein is located at the 30S-50S ribosomal subunit interface and may play a role in the structure and function of the aminoacyl-tRNA binding site. The chain is Large ribosomal subunit protein bL19 from Salinispora arenicola (strain CNS-205).